We begin with the raw amino-acid sequence, 330 residues long: Elongation factor Ts (330 aa).

Residues Thr79–Val82 form an involved in Mg(2+) ion dislocation from EF-Tu region.

It belongs to the EF-Ts family.

It localises to the cytoplasm. Its function is as follows. Associates with the EF-Tu.GDP complex and induces the exchange of GDP to GTP. It remains bound to the aminoacyl-tRNA.EF-Tu.GTP complex up to the GTP hydrolysis stage on the ribosome. This Bacteroides fragilis (strain ATCC 25285 / DSM 2151 / CCUG 4856 / JCM 11019 / LMG 10263 / NCTC 9343 / Onslow / VPI 2553 / EN-2) protein is Elongation factor Ts.